The primary structure comprises 282 residues: ATP phosphoribosyltransferase (282 aa).

It belongs to the ATP phosphoribosyltransferase family. Long subfamily. Mg(2+) is required as a cofactor.

The protein resides in the cytoplasm. It carries out the reaction 1-(5-phospho-beta-D-ribosyl)-ATP + diphosphate = 5-phospho-alpha-D-ribose 1-diphosphate + ATP. It participates in amino-acid biosynthesis; L-histidine biosynthesis; L-histidine from 5-phospho-alpha-D-ribose 1-diphosphate: step 1/9. Feedback inhibited by histidine. Catalyzes the condensation of ATP and 5-phosphoribose 1-diphosphate to form N'-(5'-phosphoribosyl)-ATP (PR-ATP). Has a crucial role in the pathway because the rate of histidine biosynthesis seems to be controlled primarily by regulation of HisG enzymatic activity. The protein is ATP phosphoribosyltransferase of Pyrobaculum calidifontis (strain DSM 21063 / JCM 11548 / VA1).